Reading from the N-terminus, the 148-residue chain is Single-stranded DNA-binding protein 1-B, mitochondrial (148 aa).

The N-terminal 17 residues, 1–17 (MFHRPVLQVFRQFARCQ), are a transit peptide targeting the mitochondrion. The 113-residue stretch at 30–142 (MNKVQLLGRV…IIADNIIFLT (113 aa)) folds into the SSB domain.

Homotetramer.

Its subcellular location is the mitochondrion. It is found in the mitochondrion matrix. It localises to the mitochondrion nucleoid. In terms of biological role, binds preferentially and cooperatively to pyrimidine rich single-stranded DNA (ss-DNA). Required to maintain the copy number of mitochondrial DNA (mtDNA) and plays crucial roles during mtDNA replication that stimulate activity of the DNA polymerase at the replication fork. May also function in mtDNA repair. This chain is Single-stranded DNA-binding protein 1-B, mitochondrial (ssbp1-b), found in Xenopus laevis (African clawed frog).